The primary structure comprises 299 residues: Muscleblind-like protein (299 aa).

2 consecutive C3H1-type zinc fingers follow at residues 38-66 (WLQVEVCREFLRGQCARSDQECKFAHPPP) and 72-100 (QGRVTACYDSIKGRCTRENPKCKYLHPPQ).

Belongs to the muscleblind family.

It localises to the nucleus. Functionally, binds to RNA with repeat sequences CUG and CCUG. The chain is Muscleblind-like protein from Caenorhabditis briggsae.